Consider the following 316-residue polypeptide: tRNA methyltransferase 10 homolog B (316 aa).

2 disordered regions span residues 1–30 (MDCE…RDDG) and 42–98 (VEYD…DLGN). A compositionally biased stretch (basic residues) spans 63-82 (VQRKQRHWERIVSSKKSKRK). Residues 75-96 (SSKKSKRKQERERRKIKRAEDL) are a coiled coil. Positions 83 to 95 (QERERRKIKRAED) are enriched in basic and acidic residues. In terms of domain architecture, SAM-dependent MTase TRM10-type spans 113-310 (TKEKLLEAKH…KGVSPGKGYI (198 aa)).

The protein belongs to the class IV-like SAM-binding methyltransferase superfamily. TRM10 family.

The enzyme catalyses guanosine(9) in tRNA + S-adenosyl-L-methionine = N(1)-methylguanosine(9) in tRNA + S-adenosyl-L-homocysteine + H(+). Its function is as follows. S-adenosyl-L-methionine-dependent guanine N(1)-methyltransferase that catalyzes the formation of N(1)-methylguanine at position 9 (m1G9) in tRNAs. Probably not able to catalyze formation of N(1)-methyladenine at position 9 (m1A9) in tRNAs. The protein is tRNA methyltransferase 10 homolog B (Trmt10b) of Rattus norvegicus (Rat).